A 113-amino-acid polypeptide reads, in one-letter code: UPF0122 protein PEPE_0845 (113 aa).

Belongs to the UPF0122 family.

Functionally, might take part in the signal recognition particle (SRP) pathway. This is inferred from the conservation of its genetic proximity to ftsY/ffh. May be a regulatory protein. This Pediococcus pentosaceus (strain ATCC 25745 / CCUG 21536 / LMG 10740 / 183-1w) protein is UPF0122 protein PEPE_0845.